The sequence spans 681 residues: Oligopeptidase A (681 aa).

His470 contacts Zn(2+). Glu471 is a catalytic residue. Residues His474 and His477 each contribute to the Zn(2+) site.

The protein belongs to the peptidase M3 family. Requires Zn(2+) as cofactor.

The enzyme catalyses Hydrolysis of oligopeptides, with broad specificity. Gly or Ala commonly occur as P1 or P1' residues, but more distant residues are also important, as is shown by the fact that Z-Gly-Pro-Gly-|-Gly-Pro-Ala is cleaved, but not Z-(Gly)(5).. Its function is as follows. May play a specific role in the degradation of signal peptides after they are released from precursor forms of secreted proteins. Can cleave N-acetyl-L-Ala(4). The sequence is that of Oligopeptidase A (prlC) from Haemophilus influenzae (strain ATCC 51907 / DSM 11121 / KW20 / Rd).